A 439-amino-acid chain; its full sequence is GTPase Obg (439 aa).

In terms of domain architecture, Obg spans 1-159 (MAFVDQAEIE…RKLKLELKVL (159 aa)). In terms of domain architecture, OBG-type G spans 160–336 (ADVGLVGFPS…LMRLTADLLA (177 aa)). Residues 166 to 173 (GFPSAGKS), 191 to 195 (FTTLS), 213 to 216 (DLPG), 283 to 286 (TKMD), and 317 to 319 (SAL) each bind GTP. 2 residues coordinate Mg(2+): S173 and T193. Positions 358 to 439 (DFKPEQHNFT…NSDFVFEFSD (82 aa)) constitute an OCT domain.

It belongs to the TRAFAC class OBG-HflX-like GTPase superfamily. OBG GTPase family. As to quaternary structure, monomer. Mg(2+) is required as a cofactor.

Its subcellular location is the cytoplasm. Functionally, an essential GTPase which binds GTP, GDP and possibly (p)ppGpp with moderate affinity, with high nucleotide exchange rates and a fairly low GTP hydrolysis rate. Plays a role in control of the cell cycle, stress response, ribosome biogenesis and in those bacteria that undergo differentiation, in morphogenesis control. This Leuconostoc citreum (strain KM20) protein is GTPase Obg.